We begin with the raw amino-acid sequence, 120 residues long: Large ribosomal subunit protein uL18 (120 aa).

It belongs to the universal ribosomal protein uL18 family. Part of the 50S ribosomal subunit; part of the 5S rRNA/L5/L18/L25 subcomplex. Contacts the 5S and 23S rRNAs.

Functionally, this is one of the proteins that bind and probably mediate the attachment of the 5S RNA into the large ribosomal subunit, where it forms part of the central protuberance. This chain is Large ribosomal subunit protein uL18, found in Nitrobacter hamburgensis (strain DSM 10229 / NCIMB 13809 / X14).